Consider the following 342-residue polypeptide: Phosphate acyltransferase (342 aa).

The protein belongs to the PlsX family. In terms of assembly, homodimer. Probably interacts with PlsY.

The protein localises to the cytoplasm. The enzyme catalyses a fatty acyl-[ACP] + phosphate = an acyl phosphate + holo-[ACP]. Its pathway is lipid metabolism; phospholipid metabolism. Functionally, catalyzes the reversible formation of acyl-phosphate (acyl-PO(4)) from acyl-[acyl-carrier-protein] (acyl-ACP). This enzyme utilizes acyl-ACP as fatty acyl donor, but not acyl-CoA. The polypeptide is Phosphate acyltransferase (Actinobacillus succinogenes (strain ATCC 55618 / DSM 22257 / CCUG 43843 / 130Z)).